The primary structure comprises 155 residues: Ribosomal RNA large subunit methyltransferase H (155 aa).

S-adenosyl-L-methionine-binding positions include L73, G104, and 123–128; that span reads LSPLTL.

It belongs to the RNA methyltransferase RlmH family. Homodimer.

Its subcellular location is the cytoplasm. The catalysed reaction is pseudouridine(1915) in 23S rRNA + S-adenosyl-L-methionine = N(3)-methylpseudouridine(1915) in 23S rRNA + S-adenosyl-L-homocysteine + H(+). Its function is as follows. Specifically methylates the pseudouridine at position 1915 (m3Psi1915) in 23S rRNA. This is Ribosomal RNA large subunit methyltransferase H from Stutzerimonas stutzeri (strain A1501) (Pseudomonas stutzeri).